Consider the following 160-residue polypeptide: Transcription elongation factor GreA (160 aa).

The stretch at 49-77 (SEYQSAKDEQAFVEGRIQTLKNMIDNAEI) forms a coiled coil.

Belongs to the GreA/GreB family.

Functionally, necessary for efficient RNA polymerase transcription elongation past template-encoded arresting sites. The arresting sites in DNA have the property of trapping a certain fraction of elongating RNA polymerases that pass through, resulting in locked ternary complexes. Cleavage of the nascent transcript by cleavage factors such as GreA or GreB allows the resumption of elongation from the new 3'terminus. GreA releases sequences of 2 to 3 nucleotides. This chain is Transcription elongation factor GreA, found in Leuconostoc mesenteroides subsp. mesenteroides (strain ATCC 8293 / DSM 20343 / BCRC 11652 / CCM 1803 / JCM 6124 / NCDO 523 / NBRC 100496 / NCIMB 8023 / NCTC 12954 / NRRL B-1118 / 37Y).